The primary structure comprises 49 residues: Large ribosomal subunit protein bL33A (49 aa).

The interval 20–49 (KKNKRNNPDRVEFKKYCPRDKKSTLHRETK) is disordered. A compositionally biased stretch (basic and acidic residues) spans 25–49 (NNPDRVEFKKYCPRDKKSTLHRETK).

This sequence belongs to the bacterial ribosomal protein bL33 family. In terms of assembly, part of the 50S ribosomal subunit. Interacts with VmlR.

The chain is Large ribosomal subunit protein bL33A (rpmGA) from Bacillus subtilis (strain 168).